Consider the following 271-residue polypeptide: Tryptophan synthase alpha chain (271 aa).

Residues Glu-47 and Asp-58 each act as proton acceptor in the active site.

It belongs to the TrpA family. As to quaternary structure, tetramer of two alpha and two beta chains.

It carries out the reaction (1S,2R)-1-C-(indol-3-yl)glycerol 3-phosphate + L-serine = D-glyceraldehyde 3-phosphate + L-tryptophan + H2O. It functions in the pathway amino-acid biosynthesis; L-tryptophan biosynthesis; L-tryptophan from chorismate: step 5/5. Its function is as follows. The alpha subunit is responsible for the aldol cleavage of indoleglycerol phosphate to indole and glyceraldehyde 3-phosphate. The chain is Tryptophan synthase alpha chain from Thermus thermophilus (strain ATCC BAA-163 / DSM 7039 / HB27).